The chain runs to 190 residues: Adenylate kinase (190 aa).

12-17 (GSGKTT) contacts ATP. The NMP stretch occupies residues 34 to 63 (STGDLLREEVASGSEYGKTIDSFISKGNLV). AMP-binding positions include T35, R40, 61-63 (NLV), 88-91 (GYPR), and Q95. Positions 130 to 136 (GRARGAD) are LID. R131 is an ATP binding site. AMP is bound by residues R133 and R145. R173 is a binding site for ATP.

Belongs to the adenylate kinase family. As to quaternary structure, monomer.

Its subcellular location is the cytoplasm. It catalyses the reaction AMP + ATP = 2 ADP. Its pathway is purine metabolism; AMP biosynthesis via salvage pathway; AMP from ADP: step 1/1. In terms of biological role, catalyzes the reversible transfer of the terminal phosphate group between ATP and AMP. Plays an important role in cellular energy homeostasis and in adenine nucleotide metabolism. The polypeptide is Adenylate kinase (Helicobacter hepaticus (strain ATCC 51449 / 3B1)).